The sequence spans 747 residues: Phenylalanine ammonia-lyase 2 (747 aa).

Positions 1–20 (MTILSGTTAAPRVNGTTMNG) are enriched in polar residues. Residues 1–47 (MTILSGTTAAPRVNGTTMNGHSKPHTNGVHLNGHAPKATTESPWPQS) form a disordered region. The Proton donor/acceptor role is filled by Tyr-124. Positions 229-231 (ASG) form a cross-link, 5-imidazolinone (Ala-Gly). Ser-230 is subject to 2,3-didehydroalanine (Ser). (E)-cinnamate is bound by residues Asn-290, Gln-380, Arg-386, Asn-416, Lys-487, Glu-515, and Asn-518.

This sequence belongs to the PAL/histidase family. Homotetramer. Contains an active site 4-methylidene-imidazol-5-one (MIO), which is formed autocatalytically by cyclization and dehydration of residues Ala-Ser-Gly.

It is found in the cytoplasm. The enzyme catalyses L-phenylalanine = (E)-cinnamate + NH4(+). It functions in the pathway phenylpropanoid metabolism; trans-cinnamate biosynthesis; trans-cinnamate from L-phenylalanine: step 1/1. Catalyzes the non-oxidative deamination of L-phenylalanine to form trans-cinnamic acid and a free ammonium ion. Facilitates the commitment step in phenylpropanoid pathways that produce secondary metabolites such as lignins, coumarins and flavonoids. The chain is Phenylalanine ammonia-lyase 2 from Pleurotus ostreatus (Oyster mushroom).